We begin with the raw amino-acid sequence, 391 residues long: Salivary protein TRIO (391 aa).

Residues 1–24 (MCRGLSAVLILLVSLSAQLHVVVG) form the signal peptide. Asn323 carries an N-linked (GlcNAc...) asparagine glycan.

As to expression, female salivary gland (at protein level). Female saliva (at protein level). Not detected in female midgut, head and carcass (at protein level). Not detected in male tissues (at protein level).

The protein localises to the secreted. Functionally, required for efficient probing on a mammalian host. Alters the local inflammatory response in the host skin following a mosquito bite by suppressing TNF-alpha/TNF expression. (Microbial infection) Contributes to optimal transmission of Plasmodium berghei sporozoites to mice. Its function is as follows. (Microbial infection) Contributes to optimal transmission of Plasmodium falciparum sporozoites to mammalian host. The sequence is that of Salivary protein TRIO from Anopheles gambiae (African malaria mosquito).